Consider the following 173-residue polypeptide: Co-chaperone protein HscB homolog (173 aa).

The region spanning 5–77 (CHYALFDLQP…PRRARYLLAI (73 aa)) is the J domain.

This sequence belongs to the HscB family. In terms of assembly, interacts with HscA and stimulates its ATPase activity.

Its function is as follows. Co-chaperone involved in the maturation of iron-sulfur cluster-containing proteins. Seems to help targeting proteins to be folded toward HscA. This is Co-chaperone protein HscB homolog from Pseudomonas entomophila (strain L48).